The primary structure comprises 632 residues: 1-deoxy-D-xylulose-5-phosphate synthase (632 aa).

Residues His-72 and 113–115 (GHA) each bind thiamine diphosphate. Asp-144 contacts Mg(2+). Residues 145 to 146 (GA), Asn-174, Tyr-285, and Glu-368 each bind thiamine diphosphate. Asn-174 lines the Mg(2+) pocket.

Belongs to the transketolase family. DXPS subfamily. Homodimer. It depends on Mg(2+) as a cofactor. Requires thiamine diphosphate as cofactor.

It carries out the reaction D-glyceraldehyde 3-phosphate + pyruvate + H(+) = 1-deoxy-D-xylulose 5-phosphate + CO2. Its pathway is metabolic intermediate biosynthesis; 1-deoxy-D-xylulose 5-phosphate biosynthesis; 1-deoxy-D-xylulose 5-phosphate from D-glyceraldehyde 3-phosphate and pyruvate: step 1/1. Functionally, catalyzes the acyloin condensation reaction between C atoms 2 and 3 of pyruvate and glyceraldehyde 3-phosphate to yield 1-deoxy-D-xylulose-5-phosphate (DXP). The polypeptide is 1-deoxy-D-xylulose-5-phosphate synthase (Cyanothece sp. (strain PCC 7425 / ATCC 29141)).